The chain runs to 311 residues: Eukaryotic translation initiation factor 3 subunit E (311 aa).

Residues 100–280 (VYYNYPKGRD…MGVKSVSIHE (181 aa)) form the PCI domain.

Belongs to the eIF-3 subunit E family. In terms of assembly, component of the eukaryotic translation initiation factor 3 (eIF-3) complex.

It is found in the cytoplasm. In terms of biological role, component of the eukaryotic translation initiation factor 3 (eIF-3) complex, which is involved in protein synthesis of a specialized repertoire of mRNAs and, together with other initiation factors, stimulates binding of mRNA and methionyl-tRNAi to the 40S ribosome. The eIF-3 complex specifically targets and initiates translation of a subset of mRNAs involved in cell proliferation. The polypeptide is Eukaryotic translation initiation factor 3 subunit E (Caenorhabditis briggsae).